Here is a 167-residue protein sequence, read N- to C-terminus: N-alpha-acetyltransferase (167 aa).

Positions 12 to 167 constitute an N-acetyltransferase domain; it reads YRIRNARLTD…EDAYLMAAPL (156 aa). Substrate is bound at residue tyrosine 37. Histidine 88 contacts Zn(2+). Residues 92–94 and 100–105 each bind acetyl-CoA; these read IAV and RLGIGT. Glutamate 127 contacts Zn(2+). Residues asparagine 132 and 139–141 contribute to the acetyl-CoA site; that span reads YKK. Tyrosine 154 lines the substrate pocket.

The protein belongs to the acetyltransferase family. ARD1 subfamily. In terms of assembly, homodimer.

The protein localises to the cytoplasm. The catalysed reaction is N-terminal L-alanyl-[protein] + acetyl-CoA = N-terminal N(alpha)-acetyl-L-alanyl-[protein] + CoA + H(+). It carries out the reaction N-terminal L-seryl-[protein] + acetyl-CoA = N-terminal N(alpha)-acetyl-L-seryl-[protein] + CoA + H(+). The enzyme catalyses N-terminal L-methionyl-L-leucyl-[protein] + acetyl-CoA = N-terminal N(alpha)-acetyl-L-methionyl-L-leucyl-[protein] + CoA + H(+). It catalyses the reaction N-terminal L-methionyl-L-glutamyl-[protein] + acetyl-CoA = N-terminal N(alpha)-acetyl-L-methionyl-L-glutamyl-[protein] + CoA + H(+). Its function is as follows. Displays alpha (N-terminal) acetyltransferase activity. Catalyzes the covalent attachment of an acetyl moiety from acetyl-CoA to the free alpha-amino group at the N-terminus of a protein. In Sulfurisphaera tokodaii (strain DSM 16993 / JCM 10545 / NBRC 100140 / 7) (Sulfolobus tokodaii), this protein is N-alpha-acetyltransferase.